The chain runs to 183 residues: Copper metallothionein 2 (183 aa).

A cys-rich copper-binding 1 region spans residues 1 to 35 (MAFNPNPEKTTSCCSTSKAQDKCTCPKGKCECETC). The spacer B1 stretch occupies residues 36–45 (PKSTKTPGSG). The segment at 46–79 (PCNCGVKEKVSTCGCNGSGAACTCPPGQCACDSC) is cys-rich copper-binding 2. A spacer B2 region spans residues 80–88 (PRKAKSVST). Positions 89 to 110 (CGCGGSAAACSCPPGKCACDSC) are cys-rich copper-binding 3. The spacer B3 stretch occupies residues 111–120 (PKQAQEKVSS). The interval 121-142 (CACNGSGGACTCPPGKCSCSGC) is cys-rich copper-binding 4. A spacer B4 region spans residues 143–156 (PAQAKENPADQPTT). Positions 157–183 (CGCQGVGVACTCPPGQCACDGCPAKAK) are cys-rich copper-binding 5.

This sequence belongs to the metallothionein superfamily.

The protein localises to the cytoplasm. The protein resides in the cell cortex. Its function is as follows. Copper metallothionein that protects the cell against copper toxicity by tightly chelating copper ions. Required for antioxidant-mediated growth rescue in the presence of fluconazole. Acts as a critical factors for lung colonization and virulence. The polypeptide is Copper metallothionein 2 (Cryptococcus neoformans var. grubii serotype A (strain H99 / ATCC 208821 / CBS 10515 / FGSC 9487) (Filobasidiella neoformans var. grubii)).